The primary structure comprises 782 residues: Endonuclease MutS2 (782 aa).

336–343 is a binding site for ATP; sequence GPNTGGKT. The Smr domain maps to 707 to 782; that stretch reads LDLRGYRYED…GFGVTVATLK (76 aa).

It belongs to the DNA mismatch repair MutS family. MutS2 subfamily. In terms of assembly, homodimer. Binds to stalled ribosomes, contacting rRNA.

In terms of biological role, endonuclease that is involved in the suppression of homologous recombination and thus may have a key role in the control of bacterial genetic diversity. Functionally, acts as a ribosome collision sensor, splitting the ribosome into its 2 subunits. Detects stalled/collided 70S ribosomes which it binds and splits by an ATP-hydrolysis driven conformational change. Acts upstream of the ribosome quality control system (RQC), a ribosome-associated complex that mediates the extraction of incompletely synthesized nascent chains from stalled ribosomes and their subsequent degradation. Probably generates substrates for RQC. This chain is Endonuclease MutS2, found in Staphylococcus aureus (strain MSSA476).